The chain runs to 1505 residues: Phosphatidylinositol 3-kinase C2 domain-containing subunit gamma (1505 aa).

Positions 1–32 (MAYNWQTEPNRAEPQEGGHDHQQCHHADQHLS) are disordered. Residues 10–31 (NRAEPQEGGHDHQQCHHADQHL) show a composition bias toward basic and acidic residues. Residues 278–370 (PSRLFADTQF…IQLHLQRSRD (93 aa)) enclose the PI3K-RBD domain. A C2 PI3K-type domain is found at 540 to 688 (LHSHLSFTVC…TPLTLQIDFP (149 aa)). One can recognise a PIK helical domain in the interval 703-879 (RTDHQEPPRE…QELLAALQFC (177 aa)). A PI3K/PI4K catalytic domain is found at 948–1226 (DRDACSYFTS…KIKQSLECFP (279 aa)). Positions 954–960 (YFTSNAL) are G-loop. The catalytic loop stretch occupies residues 1090–1098 (GVCDRHNDN). Positions 1109-1135 (HIDFGKFLGHAQTFGGIKRDRAPFIFT) are activation loop. The region spanning 1259–1371 (LNKTRTIQRV…SFFLSEHIQQ (113 aa)) is the PX domain. One can recognise a C2 domain in the interval 1384-1505 (HSPDKSPQVQ…KWYPLGNSII (122 aa)).

It belongs to the PI3/PI4-kinase family. Predominantly expressed in normal liver. High levels also found in regenerating liver. Very low levels found in heart and testis.

The protein localises to the membrane. The enzyme catalyses a 1,2-diacyl-sn-glycero-3-phospho-(1D-myo-inositol) + ATP = a 1,2-diacyl-sn-glycero-3-phospho-(1D-myo-inositol-3-phosphate) + ADP + H(+). It carries out the reaction a 1,2-diacyl-sn-glycero-3-phospho-(1D-myo-inositol 4-phosphate) + ATP = a 1,2-diacyl-sn-glycero-3-phospho-(1D-myo-inositol-3,4-bisphosphate) + ADP + H(+). Functionally, generates phosphatidylinositol 3-phosphate (PtdIns3P) and phosphatidylinositol 3,4-bisphosphate (PtdIns(3,4)P2) that act as second messengers. May play a role in SDF1A-stimulated chemotaxis. This Rattus norvegicus (Rat) protein is Phosphatidylinositol 3-kinase C2 domain-containing subunit gamma (Pik3c2g).